The chain runs to 440 residues: 3-phosphoshikimate 1-carboxyvinyltransferase (440 aa).

3-phosphoshikimate is bound by residues Lys-28, Ser-29, and Arg-33. A phosphoenolpyruvate-binding site is contributed by Lys-28. Phosphoenolpyruvate-binding residues include Gly-98 and Arg-126. Positions 171, 173, 318, and 345 each coordinate 3-phosphoshikimate. Residue Gln-173 participates in phosphoenolpyruvate binding. The active-site Proton acceptor is the Asp-318. Positions 349 and 391 each coordinate phosphoenolpyruvate.

It belongs to the EPSP synthase family. As to quaternary structure, monomer.

The protein resides in the cytoplasm. The catalysed reaction is 3-phosphoshikimate + phosphoenolpyruvate = 5-O-(1-carboxyvinyl)-3-phosphoshikimate + phosphate. Its pathway is metabolic intermediate biosynthesis; chorismate biosynthesis; chorismate from D-erythrose 4-phosphate and phosphoenolpyruvate: step 6/7. In terms of biological role, catalyzes the transfer of the enolpyruvyl moiety of phosphoenolpyruvate (PEP) to the 5-hydroxyl of shikimate-3-phosphate (S3P) to produce enolpyruvyl shikimate-3-phosphate and inorganic phosphate. This Anaeromyxobacter dehalogenans (strain 2CP-C) protein is 3-phosphoshikimate 1-carboxyvinyltransferase.